Reading from the N-terminus, the 80-residue chain is Lantibiotic Flvalpha.a (80 aa).

Residues 1 to 38 constitute a propeptide, cleaved by FlvT; that stretch reads MNKNPIYRSEEEAKDIACGNVAAELDENSQALDAINGA. Residues threonine 43 and threonine 47 each carry the 2,3-didehydrobutyrine; by FlvM1 modification. The segment at residues 52-55 is a cross-link (beta-methyllanthionine (Thr-Cys); by FlvM1); sequence TVGC. Residues 58 to 68 constitute a cross-link (lanthionine (Ser-Cys); by FlvM1); it reads SYGLGNGGYCC. Cross-links (beta-methyllanthionine (Thr-Cys); by FlvM1) lie at residues 69 to 74 and 71 to 78; these read TYTVEC and TVECSKTC.

Post-translationally, the lanthionine formed by Ser-58 and Cys-68 forms a putative lipid II binding motif. Maturation of FlvA1 peptides involves the enzymatic conversion of Thr, and Ser into dehydrated AA and the formation of thioether bonds with cysteines. Modifications are processed by the flavecin synthetase FlvM1. This is followed by membrane translocation and cleavage of the modified precursor. In terms of processing, contains DL-lanthionine and DL-beta-methyllanthionine, when coepressed in E.coli with the flavecin synthetase FlvM1.

Its subcellular location is the secreted. Lanthionine-containing peptide antibiotic (lantibiotic) only active on Gram-positive bacteria in synergy with Flvbeta peptides, which are encoded by the same operon than Flvalpha.a. Shows antibacterial activity in synergy with Flvbeta.b, Flvbeta.c, Flvbeta.e and Flvbeta.g. Does not show antibacterial activity when tested with Flvbeta.a, Flvbeta.d, Flvbeta.f and Flvbeta.h. The bactericidal activity of lantibiotics is based on depolarization of energized bacterial cytoplasmic membranes, initiated by the formation of aqueous transmembrane pores. The polypeptide is Lantibiotic Flvalpha.a (Ruminococcus flavefaciens).